Consider the following 445-residue polypeptide: MEKTQIQQLVKQFPLVQELIELNPVTWFNPRATTLQAGLPFVGLDAADVADAEQRLARFAPYLSAAFPETRAANGVIESEVVALPAMQTALDQRYGLSLAGRLLLKKDSHLPISGSIKARGGIYEVLAHAEKLALAAGLLQLTDDYAKLFSAEFREFFGGYRIAVGSTGNLGMSIGIISARLGFSVSVHMSADAREWKKQKLRDNGVNVVEYEQDYGVAVEQGRLQAASDPRCFFIDDENSQTLFLGYAVAGGRLRRQFAESGVQVDAQHPLFVYLPCGVGGGPGGVAFGLKLAFGDHVHCIFAEPTHSPCMLLGVHTGLHDGIAVQDLGIDNQTAADGLAVGRASGFVGRAMERLLSGFYTLSDREMFALLGLLDSHEHIQLEPSALAGMPGPWRVTADTEWLAAQGLNEQQMKNATHLVWATGGGMVPEAEMAKYLANARQSI.

N6-(pyridoxal phosphate)lysine is present on lysine 118.

Belongs to the serine/threonine dehydratase family. DsdA subfamily. Monomer. It depends on pyridoxal 5'-phosphate as a cofactor.

The enzyme catalyses D-serine = pyruvate + NH4(+). The sequence is that of D-serine dehydratase from Serratia proteamaculans (strain 568).